The following is a 557-amino-acid chain: Inositol-3-phosphate synthase 1 (557 aa).

The NAD(+) site is built by G67, G68, N69, N70, D141, S177, V178, Q188, R191, T228, A229, N230, T231, G278, S279, D303, S306, N337, N338, D339, and K352. S279 is subject to Phosphoserine. Phosphoserine is present on S357. NAD(+)-binding residues include G390, D391, D419, and S420. The tract at residues G514–A557 is disordered. A Phosphoserine modification is found at S524. Positions T533 to A557 are enriched in polar residues.

This sequence belongs to the myo-inositol 1-phosphate synthase family. Homotrimer. Requires NAD(+) as cofactor. Phosphorylation at Ser-524 does not appear to affect enzyme activity, and is detected in brain and testis. In terms of tissue distribution, expressed in testis, brain and epididymis (at protein level). Moderately expressed in brain, lung, liver, and kidney. Low expression in heart and spleen. Very low expression in skeletal muscle. As to expression, expressed in testis, spleen, heart, brainstem, hippocampus, cerebellum, cortex and amygdala. Absent or very lowly expressed in intestine, lung and muscle. Expressed in intestine, lung, liver, muscle, testis, spleen, brainstem, hippocampus, cerebellum, cortex and amygdala. Absent or lowly expressed in heart and kidney. In terms of tissue distribution, expressed in intestine (at protein level).

Its subcellular location is the cytoplasm. The catalysed reaction is D-glucose 6-phosphate = 1D-myo-inositol 3-phosphate. It functions in the pathway polyol metabolism; myo-inositol biosynthesis; myo-inositol from D-glucose 6-phosphate: step 1/2. Inhibited by 2-deoxyglucitol 6-phosphate (dgtolP) and 2-deoxy-D-glucose 6-phosphate. Inhibited by copper, mercury, cadmium, zinc and copper ions. Activated by potassium and ammonium ions. Functionally, key enzyme in myo-inositol biosynthesis pathway that catalyzes the conversion of glucose 6-phosphate to 1-myo-inositol 1-phosphate in a NAD-dependent manner. Rate-limiting enzyme in the synthesis of all inositol-containing compounds. In terms of biological role, key enzyme in myo-inositol biosynthesis pathway that catalyzes the conversion of glucose 6-phosphate to 1-myo-inositol 1-phosphate in a NAD-dependent manner. Its function is as follows. Competitively inhibits the function of isoform 1, presumably by competing for NAD cofactor. The sequence is that of Inositol-3-phosphate synthase 1 (Isyna1) from Rattus norvegicus (Rat).